Here is a 928-residue protein sequence, read N- to C-terminus: Heme/hemopexin-binding protein (928 aa).

The signal sequence occupies residues 1–21; the sequence is MYKLNVISLIILTTCSGAAYA. A run of 10 repeats spans residues 101-106, 149-154, 155-160, 161-166, 167-172, 205-210, 279-284, 410-415, 635-640, and 674-679. The 6 X 6 AA approximate repeats stretch occupies residues 101 to 679; the sequence is NGKVYLANPN…RLGMNGKVSM (579 aa). The segment at 149–172 is 4 X 6 AA approximate tandem repeats; that stretch reads KDRQVLKEGLVLKDGQVVKEGQVI.

It localises to the secreted. In terms of biological role, binds heme/hemopexin complexes. The sequence is that of Heme/hemopexin-binding protein (hxuA) from Haemophilus influenzae.